The sequence spans 339 residues: Phenylalanine--tRNA ligase alpha subunit (339 aa).

Residue glutamate 250 coordinates Mg(2+).

Belongs to the class-II aminoacyl-tRNA synthetase family. Phe-tRNA synthetase alpha subunit type 1 subfamily. In terms of assembly, tetramer of two alpha and two beta subunits. The cofactor is Mg(2+).

Its subcellular location is the cytoplasm. It carries out the reaction tRNA(Phe) + L-phenylalanine + ATP = L-phenylalanyl-tRNA(Phe) + AMP + diphosphate + H(+). The protein is Phenylalanine--tRNA ligase alpha subunit of Christiangramia forsetii (strain DSM 17595 / CGMCC 1.15422 / KT0803) (Gramella forsetii).